The primary structure comprises 459 residues: tRNA modification GTPase MnmE (459 aa).

(6S)-5-formyl-5,6,7,8-tetrahydrofolate contacts are provided by Arg-21, Glu-84, and Lys-123. The TrmE-type G domain occupies 219–380 (GMLTVIVGQP…LEKEIKQRVY (162 aa)). Asn-229 serves as a coordination point for K(+). Residues 229-234 (NVGKSS), 248-254 (TDIPGTT), and 273-276 (DTAG) contribute to the GTP site. Ser-233 contributes to the Mg(2+) binding site. 3 residues coordinate K(+): Thr-248, Ile-250, and Thr-253. Position 254 (Thr-254) interacts with Mg(2+). Lys-459 is a binding site for (6S)-5-formyl-5,6,7,8-tetrahydrofolate.

This sequence belongs to the TRAFAC class TrmE-Era-EngA-EngB-Septin-like GTPase superfamily. TrmE GTPase family. Homodimer. Heterotetramer of two MnmE and two MnmG subunits. K(+) is required as a cofactor.

Its subcellular location is the cytoplasm. In terms of biological role, exhibits a very high intrinsic GTPase hydrolysis rate. Involved in the addition of a carboxymethylaminomethyl (cmnm) group at the wobble position (U34) of certain tRNAs, forming tRNA-cmnm(5)s(2)U34. The sequence is that of tRNA modification GTPase MnmE from Desulfitobacterium hafniense (strain Y51).